Here is a 701-residue protein sequence, read N- to C-terminus: Centrosomal protein of 83 kDa (701 aa).

The segment covering 1-14 (MVVSTFTDMDTFPN) has biased composition (polar residues). Residues 1–23 (MVVSTFTDMDTFPNNFPPGGDSG) are disordered. Coiled-coil stretches lie at residues 40–634 (LRCE…SLIL) and 665–698 (HMQEEQHQRELSLLRKRLEELETTQRKQLEELGS). Position 698 is a phosphoserine (S698).

Belongs to the CEP83 family. Interacts with CEP164 and IFT20.

The protein localises to the cytoplasm. The protein resides in the cytoskeleton. It is found in the microtubule organizing center. Its subcellular location is the centrosome. It localises to the centriole. Its function is as follows. Component of the distal appendage region of the centriole involved in the initiation of primary cilium assembly. May collaborate with IFT20 in the trafficking of ciliary membrane proteins from the Golgi complex to the cilium during the initiation of primary cilium assembly. This Homo sapiens (Human) protein is Centrosomal protein of 83 kDa (CEP83).